Here is a 204-residue protein sequence, read N- to C-terminus: Large ribosomal subunit protein eL15A (204 aa).

Residues 164 to 185 (LTATGKKSRGINKGHKFNNTKA) are disordered. Over residues 169-185 (KKSRGINKGHKFNNTKA) the composition is skewed to basic residues.

Belongs to the eukaryotic ribosomal protein eL15 family. As to quaternary structure, component of the large ribosomal subunit (LSU). Mature yeast ribosomes consist of a small (40S) and a large (60S) subunit. The 40S small subunit contains 1 molecule of ribosomal RNA (18S rRNA) and 33 different proteins (encoded by 57 genes). The large 60S subunit contains 3 rRNA molecules (25S, 5.8S and 5S rRNA) and 46 different proteins (encoded by 81 genes).

It localises to the cytoplasm. Functionally, component of the ribosome, a large ribonucleoprotein complex responsible for the synthesis of proteins in the cell. The small ribosomal subunit (SSU) binds messenger RNAs (mRNAs) and translates the encoded message by selecting cognate aminoacyl-transfer RNA (tRNA) molecules. The large subunit (LSU) contains the ribosomal catalytic site termed the peptidyl transferase center (PTC), which catalyzes the formation of peptide bonds, thereby polymerizing the amino acids delivered by tRNAs into a polypeptide chain. The nascent polypeptides leave the ribosome through a tunnel in the LSU and interact with protein factors that function in enzymatic processing, targeting, and the membrane insertion of nascent chains at the exit of the ribosomal tunnel. The protein is Large ribosomal subunit protein eL15A of Saccharomyces cerevisiae (strain ATCC 204508 / S288c) (Baker's yeast).